The following is a 553-amino-acid chain: MAFSVQMPALGESVTEGTVTRWLKQEGDTVELDEPLVEVSTDKVDTEIPSPAAGVLTKIIAQEDDTVEVGGELAVIGDAKDAGEAAAPAPEKVPAAQPESKPAPEPPPVQPTSGAPAGGDAKPVLMPELGESVTEGTVIRWLKKIGDSVQVDEPLVEVSTDKVDTEIPSPVAGVLVSISADEDATVPVGGELARIGVAADIGAAPAPKPAPKPVPEPAPTPKAEPAPSPPAAQPAGAAEGAPYVTPLVRKLASENNIDLAGVTGTGVGGRIRKQDVLAAAEQKKRAKAPAPAAQAAAAPAPKAPPAPAPALAHLRGTTQKASRIRQITANKTRESLQATAQLTQTHEVDMTKIVGLRARAKAAFAEREGVNLTFLPFFAKAVIDALKIHPNINASYNEDTKEITYYDAEHLGFAVDTEQGLLSPVIHDAGDLSLAGLARAIADIAARARSGNLKPDELSGGTFTITNIGSQGALFDTPILVPPQAAMLGTGAIVKRPRVVVDASGNESIGVRSVCYLPLTYDHRLIDGADAGRFLTTIKHRLEEGAFEADLGL.

In terms of domain architecture, Lipoyl-binding 1 spans 2-77 (AFSVQMPALG…EVGGELAVIG (76 aa)). Lysine 43 is modified (N6-lipoyllysine). The disordered stretch occupies residues 81–125 (DAGEAAAPAPEKVPAAQPESKPAPEPPPVQPTSGAPAGGDAKPVL). The span at 84-100 (EAAAPAPEKVPAAQPES) shows a compositional bias: low complexity. Pro residues predominate over residues 101-110 (KPAPEPPPVQ). The Lipoyl-binding 2 domain occupies 121–196 (AKPVLMPELG…PVGGELARIG (76 aa)). Lysine 162 carries the N6-lipoyllysine modification. Disordered stretches follow at residues 204–238 (APAPKPAPKPVPEPAPTPKAEPAPSPPAAQPAGAA) and 278–321 (AAAE…TQKA). The segment covering 206–232 (APKPAPKPVPEPAPTPKAEPAPSPPAA) has biased composition (pro residues). Residues 243 to 280 (YVTPLVRKLASENNIDLAGVTGTGVGGRIRKQDVLAAA) enclose the Peripheral subunit-binding (PSBD) domain. Residues 288-300 (APAPAAQAAAAPA) are compositionally biased toward low complexity. Active-site residues include histidine 523 and aspartate 527.

It belongs to the 2-oxoacid dehydrogenase family. As to quaternary structure, forms a 24-polypeptide structural core with octahedral symmetry. Part of the PDH complex, consisting of multiple copies of AceE (E1), DlaT (E2) and Lpd (E3). (R)-lipoate is required as a cofactor.

The catalysed reaction is N(6)-[(R)-dihydrolipoyl]-L-lysyl-[protein] + acetyl-CoA = N(6)-[(R)-S(8)-acetyldihydrolipoyl]-L-lysyl-[protein] + CoA. Component of the pyruvate dehydrogenase (PDH) complex, that catalyzes the overall conversion of pyruvate to acetyl-CoA and CO(2). This is Dihydrolipoyllysine-residue acetyltransferase component of pyruvate dehydrogenase complex (dlaT) from Mycobacterium bovis (strain ATCC BAA-935 / AF2122/97).